We begin with the raw amino-acid sequence, 364 residues long: UDP-N-acetylglucosamine--N-acetylmuramyl-(pentapeptide) pyrophosphoryl-undecaprenol N-acetylglucosamine transferase (364 aa).

Residues 10–12, asparagine 124, arginine 161, serine 195, and glutamine 291 each bind UDP-N-acetyl-alpha-D-glucosamine; that span reads TAG.

It belongs to the glycosyltransferase 28 family. MurG subfamily.

The protein resides in the cell membrane. It catalyses the reaction di-trans,octa-cis-undecaprenyl diphospho-N-acetyl-alpha-D-muramoyl-L-alanyl-D-glutamyl-meso-2,6-diaminopimeloyl-D-alanyl-D-alanine + UDP-N-acetyl-alpha-D-glucosamine = di-trans,octa-cis-undecaprenyl diphospho-[N-acetyl-alpha-D-glucosaminyl-(1-&gt;4)]-N-acetyl-alpha-D-muramoyl-L-alanyl-D-glutamyl-meso-2,6-diaminopimeloyl-D-alanyl-D-alanine + UDP + H(+). Its pathway is cell wall biogenesis; peptidoglycan biosynthesis. Cell wall formation. Catalyzes the transfer of a GlcNAc subunit on undecaprenyl-pyrophosphoryl-MurNAc-pentapeptide (lipid intermediate I) to form undecaprenyl-pyrophosphoryl-MurNAc-(pentapeptide)GlcNAc (lipid intermediate II). The chain is UDP-N-acetylglucosamine--N-acetylmuramyl-(pentapeptide) pyrophosphoryl-undecaprenol N-acetylglucosamine transferase from Streptomyces coelicolor (strain ATCC BAA-471 / A3(2) / M145).